Here is a 338-residue protein sequence, read N- to C-terminus: Aspartate carbamoyltransferase catalytic subunit (338 aa).

Carbamoyl phosphate is bound by residues R71 and T72. Position 99 (K99) interacts with L-aspartate. Positions 121, 151, and 154 each coordinate carbamoyl phosphate. Positions 184 and 239 each coordinate L-aspartate. Carbamoyl phosphate-binding residues include G280 and P281.

The protein belongs to the aspartate/ornithine carbamoyltransferase superfamily. ATCase family. In terms of assembly, heterododecamer (2C3:3R2) of six catalytic PyrB chains organized as two trimers (C3), and six regulatory PyrI chains organized as three dimers (R2).

It carries out the reaction carbamoyl phosphate + L-aspartate = N-carbamoyl-L-aspartate + phosphate + H(+). The protein operates within pyrimidine metabolism; UMP biosynthesis via de novo pathway; (S)-dihydroorotate from bicarbonate: step 2/3. Catalyzes the condensation of carbamoyl phosphate and aspartate to form carbamoyl aspartate and inorganic phosphate, the committed step in the de novo pyrimidine nucleotide biosynthesis pathway. This is Aspartate carbamoyltransferase catalytic subunit from Stutzerimonas stutzeri (strain A1501) (Pseudomonas stutzeri).